Reading from the N-terminus, the 339-residue chain is Caspase drICE (339 aa).

The propeptide occupies 1–28 (MDATNNGESADQVGIRVGNPEQPNDHTD). The disordered stretch occupies residues 1–45 (MDATNNGESADQVGIRVGNPEQPNDHTDALGSVGSGGAGSSGLVA). Active-site residues include His169 and Cys211. Residues 218–230 (GGVTMQRSQTETD) constitute a propeptide that is removed on maturation.

Belongs to the peptidase C14A family. Heterotetramer that consists of two anti-parallel arranged heterodimers, each one formed by a 21 kDa (p21) and a 12 kDa (p12) subunit. Inactive pro-form can homodimerize. Dronc and Drice can form a stable complex. Interacts with Diap2 (via BIR3 domain) to form a stable complex. May interact with some isoforms of Dark.

Its activity is regulated as follows. Zymogen activated by proteolytic cleavage; cleaved by the initiator caspase Dronc upon apoptosis induction. Functionally, involved in the activation cascade of caspases responsible for apoptosis execution. Acts downstream of rpr. Cleaves baculovirus p35 and lamin DmO in vitro. The sequence is that of Caspase drICE (Drice) from Drosophila melanogaster (Fruit fly).